A 143-amino-acid polypeptide reads, in one-letter code: Transcriptional regulator MraZ (143 aa).

2 consecutive SpoVT-AbrB domains span residues 5–47 and 76–119; these read EYSH…PQKE and AAEC…SQEL.

This sequence belongs to the MraZ family. Forms oligomers.

The protein resides in the cytoplasm. The protein localises to the nucleoid. This is Transcriptional regulator MraZ from Carboxydothermus hydrogenoformans (strain ATCC BAA-161 / DSM 6008 / Z-2901).